The chain runs to 172 residues: Large ribosomal subunit protein uL10 (172 aa).

This sequence belongs to the universal ribosomal protein uL10 family. Part of the ribosomal stalk of the 50S ribosomal subunit. The N-terminus interacts with L11 and the large rRNA to form the base of the stalk. The C-terminus forms an elongated spine to which L12 dimers bind in a sequential fashion forming a multimeric L10(L12)X complex.

Its function is as follows. Forms part of the ribosomal stalk, playing a central role in the interaction of the ribosome with GTP-bound translation factors. The sequence is that of Large ribosomal subunit protein uL10 from Chlamydia trachomatis serovar A (strain ATCC VR-571B / DSM 19440 / HAR-13).